The primary structure comprises 352 residues: Ion-translocating oxidoreductase complex subunit D (352 aa).

Transmembrane regions (helical) follow at residues 20-40, 42-62, 69-91, and 123-143; these read IMLL…WFFG, GTLF…AIVL, VASH…SIPP, and PAMI…TSWL. Position 187 is an FMN phosphoryl threonine (Thr187). 5 helical membrane passes run 215 to 235, 242 to 262, 267 to 287, 301 to 321, and 322 to 342; these read LAGV…VFLL, WHIP…GWLF, LASP…FFIL, LIFG…GGYP, and DGVA…DYYT.

Belongs to the NqrB/RnfD family. The complex is composed of six subunits: RsxA, RsxB, RsxC, RsxD, RsxE and RsxG. FMN serves as cofactor.

The protein localises to the cell inner membrane. In terms of biological role, part of a membrane-bound complex that couples electron transfer with translocation of ions across the membrane. Required to maintain the reduced state of SoxR. The sequence is that of Ion-translocating oxidoreductase complex subunit D from Salmonella paratyphi B (strain ATCC BAA-1250 / SPB7).